Consider the following 728-residue polypeptide: Cellulose synthase-like protein E6 (728 aa).

The next 2 helical transmembrane spans lie at 21 to 43 (AVYR…YRAT) and 53 to 73 (AAWL…VITQ). Catalysis depends on residues Asp141 and Asp446. The next 5 helical transmembrane spans lie at 523 to 543 (LWAA…LGLV), 546 to 566 (TPLF…VFCV), 646 to 666 (PEFV…VAGL), 669 to 689 (IMAG…LIVI), and 707 to 727 (IPLP…LLPI).

The protein belongs to the glycosyltransferase 2 family. Plant cellulose synthase-like E subfamily.

Its subcellular location is the golgi apparatus membrane. Its function is as follows. Thought to be a Golgi-localized beta-glycan synthase that polymerize the backbones of noncellulosic polysaccharides (hemicelluloses) of plant cell wall. The protein is Cellulose synthase-like protein E6 (CSLE6) of Oryza sativa subsp. japonica (Rice).